Here is a 523-residue protein sequence, read N- to C-terminus: 2-isopropylmalate synthase (523 aa).

One can recognise a Pyruvate carboxyltransferase domain in the interval valine 12–threonine 274. 4 residues coordinate Mn(2+): aspartate 21, histidine 209, histidine 211, and asparagine 245. The interval lysine 398–serine 523 is regulatory domain.

The protein belongs to the alpha-IPM synthase/homocitrate synthase family. LeuA type 1 subfamily. Homodimer. Mn(2+) serves as cofactor.

The protein localises to the cytoplasm. It catalyses the reaction 3-methyl-2-oxobutanoate + acetyl-CoA + H2O = (2S)-2-isopropylmalate + CoA + H(+). The protein operates within amino-acid biosynthesis; L-leucine biosynthesis; L-leucine from 3-methyl-2-oxobutanoate: step 1/4. In terms of biological role, catalyzes the condensation of the acetyl group of acetyl-CoA with 3-methyl-2-oxobutanoate (2-ketoisovalerate) to form 3-carboxy-3-hydroxy-4-methylpentanoate (2-isopropylmalate). This chain is 2-isopropylmalate synthase, found in Bradyrhizobium sp. (strain BTAi1 / ATCC BAA-1182).